Reading from the N-terminus, the 269-residue chain is MDRKIVALDINPANFFDAANDLAIWKDFFNKAQEKHQLVFISSCWQQTIVYLLDLLSLNNVDVIAESGAITWFCKTNQYDYQAFLDLASINVIIHHAVITNSGIFTMGKSRVDDTANLSANYFISLQKYKDFKSLWLTDFEQTLKYENFLKQLGKLELSSIYVFSPQYHMDLAFIDQIASGQPRFTHSNFYPNNLLFTSNKVTKFNALEKYTKTQGLMLKDVHYINLDETLVQNSEQLASAVFIKKQNNEGLTVQDIPDVLQKLCAQLL.

ATP is bound at residue 103–110; it reads GIFTMGKS.

This is an uncharacterized protein from Mycoplasma pneumoniae (strain ATCC 29342 / M129 / Subtype 1) (Mycoplasmoides pneumoniae).